A 527-amino-acid chain; its full sequence is Peptide chain release factor 3 (527 aa).

One can recognise a tr-type G domain in the interval N9–Q278. GTP contacts are provided by residues S18–T25, D86–H90, and N140–D143.

It belongs to the TRAFAC class translation factor GTPase superfamily. Classic translation factor GTPase family. PrfC subfamily.

The protein localises to the cytoplasm. Functionally, increases the formation of ribosomal termination complexes and stimulates activities of RF-1 and RF-2. It binds guanine nucleotides and has strong preference for UGA stop codons. It may interact directly with the ribosome. The stimulation of RF-1 and RF-2 is significantly reduced by GTP and GDP, but not by GMP. This chain is Peptide chain release factor 3, found in Haemophilus influenzae (strain 86-028NP).